Reading from the N-terminus, the 223-residue chain is ATP-dependent dethiobiotin synthetase BioD (223 aa).

Residue 11–16 (DIGKTY) coordinates ATP. A Mg(2+)-binding site is contributed by threonine 15. Residue lysine 36 is part of the active site. Substrate is bound at residue threonine 40. ATP is bound by residues aspartate 50, 110 to 113 (EGAG), and 174 to 175 (NN). Aspartate 50 and glutamate 110 together coordinate Mg(2+).

The protein belongs to the dethiobiotin synthetase family. Homodimer. The cofactor is Mg(2+).

It is found in the cytoplasm. It carries out the reaction (7R,8S)-7,8-diammoniononanoate + CO2 + ATP = (4R,5S)-dethiobiotin + ADP + phosphate + 3 H(+). It functions in the pathway cofactor biosynthesis; biotin biosynthesis; biotin from 7,8-diaminononanoate: step 1/2. Catalyzes a mechanistically unusual reaction, the ATP-dependent insertion of CO2 between the N7 and N8 nitrogen atoms of 7,8-diaminopelargonic acid (DAPA, also called 7,8-diammoniononanoate) to form a ureido ring. The sequence is that of ATP-dependent dethiobiotin synthetase BioD from Staphylococcus epidermidis (strain ATCC 35984 / DSM 28319 / BCRC 17069 / CCUG 31568 / BM 3577 / RP62A).